The following is a 161-amino-acid chain: Cytochrome c-type biogenesis protein CcmE (161 aa).

At 1–13 the chain is on the cytoplasmic side; the sequence is MSWLPKSPKARRR. The chain crosses the membrane as a helical; Signal-anchor for type II membrane protein span at residues 14-34; sequence LMLVAAIAPVLAVAAGLTLWG. Over 35–161 the chain is Periplasmic; that stretch reads LSDSISFFYT…QRPEHQGDAL (127 aa). Residues histidine 128 and tyrosine 132 each coordinate heme.

This sequence belongs to the CcmE/CycJ family.

It localises to the cell inner membrane. In terms of biological role, heme chaperone required for the biogenesis of c-type cytochromes. Transiently binds heme delivered by CcmC and transfers the heme to apo-cytochromes in a process facilitated by CcmF and CcmH. The polypeptide is Cytochrome c-type biogenesis protein CcmE (Phenylobacterium zucineum (strain HLK1)).